The primary structure comprises 886 residues: DNA mismatch repair protein MutS (886 aa).

Glycine 641–serine 648 is a binding site for ATP.

This sequence belongs to the DNA mismatch repair MutS family.

In terms of biological role, this protein is involved in the repair of mismatches in DNA. It is possible that it carries out the mismatch recognition step. This protein has a weak ATPase activity. In Rickettsia felis (strain ATCC VR-1525 / URRWXCal2) (Rickettsia azadi), this protein is DNA mismatch repair protein MutS.